We begin with the raw amino-acid sequence, 385 residues long: MRRIFLFDENSLNSSSTIDTSSASTIDTSFASQCTNFSSGQASGTQDTHAGIFEDCPGLNPNDERVVELQCEIREKCEALTQDPEMGLILGEALHAESDNVPFLQSIADDLTQNGVSGEAFQEALNIVGQAAASPLDQFEIVPLIPMHIGNFYFSFTNSSLFMLLTLSFFLLLIHFVTKKGGGNLVPNAWQSLVELLYDFVLNLVKEQIGGLSGNVKQMFFPCILVTFLFLLFCNLQGMIPYSFTVTSHFLITLALSFSIFIGITIVGFQRHGLHFFSFLLPAGVPLPLAPFLVLLELISYCFRALSLGIRLFANMMAGHSLVKILSGFAWTMLCMNDIFYFIGALGPLFIVLALTGLELGVAILQAYVFTILICIYLNDAINLH.

Positions 1–133 (MRRIFLFDEN…ALNIVGQAAA (133 aa)) are excised as a propeptide. A run of 7 helical transmembrane segments spans residues 154 to 174 (FSFTNSSLFMLLTLSFFLLLI), 220 to 240 (FFPCILVTFLFLLFCNLQGMI), 249 to 269 (HFLITLALSFSIFIGITIVGF), 276 to 296 (FFSFLLPAGVPLPLAPFLVLL), 316 to 336 (MMAGHSLVKILSGFAWTMLCM), 339 to 359 (IFYFIGALGPLFIVLALTGLE), and 362 to 382 (VAILQAYVFTILICIYLNDAI).

Belongs to the ATPase A chain family. F-type ATPases have 2 components, CF(1) - the catalytic core - and CF(0) - the membrane proton channel. CF(1) has five subunits: alpha(3), beta(3), gamma(1), delta(1), epsilon(1). CF(0) has three main subunits: a, b and c.

The protein resides in the mitochondrion inner membrane. Mitochondrial membrane ATP synthase (F(1)F(0) ATP synthase or Complex V) produces ATP from ADP in the presence of a proton gradient across the membrane which is generated by electron transport complexes of the respiratory chain. F-type ATPases consist of two structural domains, F(1) - containing the extramembraneous catalytic core and F(0) - containing the membrane proton channel, linked together by a central stalk and a peripheral stalk. During catalysis, ATP synthesis in the catalytic domain of F(1) is coupled via a rotary mechanism of the central stalk subunits to proton translocation. Key component of the proton channel; it may play a direct role in the translocation of protons across the membrane. The chain is ATP synthase subunit a-1 (ATP6-1) from Arabidopsis thaliana (Mouse-ear cress).